A 238-amino-acid chain; its full sequence is Urease subunit alpha (238 aa).

The segment at 1–102 (MKLTPKELDK…LVTVHTPIES (102 aa)) is urease gamma. The segment at 103–238 (KGKLVPGELF…DDNYVKTIKE (136 aa)) is urease beta.

In the N-terminal section; belongs to the urease gamma subunit family. It in the C-terminal section; belongs to the urease beta subunit family. As to quaternary structure, heterohexamer of 3 UreA (alpha) and 3 UreB (beta) subunits.

Its subcellular location is the cytoplasm. The enzyme catalyses urea + 2 H2O + H(+) = hydrogencarbonate + 2 NH4(+). Its pathway is nitrogen metabolism; urea degradation; CO(2) and NH(3) from urea (urease route): step 1/1. This Helicobacter acinonychis (strain Sheeba) protein is Urease subunit alpha.